Consider the following 446-residue polypeptide: Exodeoxyribonuclease 7 large subunit (446 aa).

The protein belongs to the XseA family. As to quaternary structure, heterooligomer composed of large and small subunits.

The protein resides in the cytoplasm. It carries out the reaction Exonucleolytic cleavage in either 5'- to 3'- or 3'- to 5'-direction to yield nucleoside 5'-phosphates.. Functionally, bidirectionally degrades single-stranded DNA into large acid-insoluble oligonucleotides, which are then degraded further into small acid-soluble oligonucleotides. The sequence is that of Exodeoxyribonuclease 7 large subunit from Streptococcus thermophilus (strain CNRZ 1066).